The primary structure comprises 284 residues: Neutral protease 2 homolog AFLA_119780 (284 aa).

Intrachain disulfides connect C113–C185 and C192–C210. Zn(2+) is bound at residue H235. E236 is an active-site residue. Positions 239 and 250 each coordinate Zn(2+).

Belongs to the peptidase M35 family. Zn(2+) serves as cofactor.

The protein localises to the secreted. It catalyses the reaction Preferential cleavage of bonds with hydrophobic residues in P1'. Also 3-Asn-|-Gln-4 and 8-Gly-|-Ser-9 bonds in insulin B chain.. Functionally, secreted metalloproteinase that allows assimilation of proteinaceous substrates. Shows high activities on basic nuclear substrates such as histone and protamine. In Aspergillus flavus (strain ATCC 200026 / FGSC A1120 / IAM 13836 / NRRL 3357 / JCM 12722 / SRRC 167), this protein is Neutral protease 2 homolog AFLA_119780.